The following is a 553-amino-acid chain: Dihydroxy-acid dehydratase (553 aa).

Residue Asp78 coordinates Mg(2+). Cys119 contacts [2Fe-2S] cluster. Mg(2+) is bound by residues Asp120 and Lys121. At Lys121 the chain carries N6-carboxylysine. [2Fe-2S] cluster is bound at residue Cys191. Glu442 contributes to the Mg(2+) binding site. The active-site Proton acceptor is the Ser468.

This sequence belongs to the IlvD/Edd family. As to quaternary structure, homodimer. [2Fe-2S] cluster serves as cofactor. Mg(2+) is required as a cofactor.

The catalysed reaction is (2R)-2,3-dihydroxy-3-methylbutanoate = 3-methyl-2-oxobutanoate + H2O. It carries out the reaction (2R,3R)-2,3-dihydroxy-3-methylpentanoate = (S)-3-methyl-2-oxopentanoate + H2O. Its pathway is amino-acid biosynthesis; L-isoleucine biosynthesis; L-isoleucine from 2-oxobutanoate: step 3/4. It functions in the pathway amino-acid biosynthesis; L-valine biosynthesis; L-valine from pyruvate: step 3/4. Its function is as follows. Functions in the biosynthesis of branched-chain amino acids. Catalyzes the dehydration of (2R,3R)-2,3-dihydroxy-3-methylpentanoate (2,3-dihydroxy-3-methylvalerate) into 2-oxo-3-methylpentanoate (2-oxo-3-methylvalerate) and of (2R)-2,3-dihydroxy-3-methylbutanoate (2,3-dihydroxyisovalerate) into 2-oxo-3-methylbutanoate (2-oxoisovalerate), the penultimate precursor to L-isoleucine and L-valine, respectively. The chain is Dihydroxy-acid dehydratase from Carboxydothermus hydrogenoformans (strain ATCC BAA-161 / DSM 6008 / Z-2901).